Reading from the N-terminus, the 158-residue chain is Sec-independent protein translocase protein TatB (158 aa).

The chain crosses the membrane as a helical span at residues 2–22 (FDGIGFMELLLIGVLGLVVLG). Positions 86–158 (LKQAAQSVNR…DTSSNPKANG (73 aa)) are disordered. Polar residues-rich tracts occupy residues 88–107 (QAAQSVNRPYQVQDSSSQGT), 113–136 (QIHSPAQVSQTNPTTPLETSQHLT), and 143–158 (EPSQGVDTSSNPKANG).

It belongs to the TatB family. The Tat system comprises two distinct complexes: a TatABC complex, containing multiple copies of TatA, TatB and TatC subunits, and a separate TatA complex, containing only TatA subunits. Substrates initially bind to the TatABC complex, which probably triggers association of the separate TatA complex to form the active translocon.

It localises to the cell inner membrane. In terms of biological role, part of the twin-arginine translocation (Tat) system that transports large folded proteins containing a characteristic twin-arginine motif in their signal peptide across membranes. Together with TatC, TatB is part of a receptor directly interacting with Tat signal peptides. TatB may form an oligomeric binding site that transiently accommodates folded Tat precursor proteins before their translocation. The chain is Sec-independent protein translocase protein TatB from Shewanella putrefaciens (strain CN-32 / ATCC BAA-453).